Consider the following 103-residue polypeptide: Isocitrate dehydrogenase [NAD] subunit beta, mitochondrial (103 aa).

The protein belongs to the isocitrate and isopropylmalate dehydrogenases family. As to quaternary structure, heterooligomer of subunits alpha (IDH3A), beta (IDH3B), and gamma (IDH3G) in the apparent ratio of 2:1:1. The heterodimer containing one IDH3A and one IDH3B subunit and the heterodimer containing one IDH3A and one IDH3G subunit assemble into a heterotetramer (which contains two subunits of IDH3A, one of IDH3B and one of IDH3G) and further into the heterooctamer.

The protein localises to the mitochondrion. The heterotetramer and the heterodimer composed of IDH3A and IDH3G subunits can be allosterically activated by citrate (CIT) or/and ADP, and the two activators can act independently or synergistically. The heterodimer composed of IDH3A and IDH3B subunits cannot be allosterically regulated and the allosteric regulation of the heterotetramer is through the IDH3G subunit and not the IDH3B subunit. The IDH3G subunit contains the allosteric site which consists of a CIT-binding site and an ADP-binding site, and the binding of CIT and ADP causes conformational changes at the allosteric site which are transmitted to the active site in the catalytic subunit (IDH3A) through a cascade of conformational changes at the heterodimer interface, leading to stabilization of the isocitrate-binding at the active site and thus activation of the enzyme. ATP can activate the heterotetramer and the heterodimer composed of IDH3A and IDH3G subunits at low concentrations but inhibits their activities at high concentrations, whereas ATP exhibits only inhibitory effect on the heterodimer composed of IDH3A and IDH3B subunits. Plays a structural role to facilitate the assembly and ensure the full activity of the enzyme catalyzing the decarboxylation of isocitrate (ICT) into alpha-ketoglutarate. The heterodimer composed of the alpha (IDH3A) and beta (IDH3B) subunits and the heterodimer composed of the alpha (IDH3A) and gamma (IDH3G) subunits, have considerable basal activity but the full activity of the heterotetramer (containing two subunits of IDH3A, one of IDH3B and one of IDH3G) requires the assembly and cooperative function of both heterodimers. The sequence is that of Isocitrate dehydrogenase [NAD] subunit beta, mitochondrial (IDH3B) from Sus scrofa (Pig).